The primary structure comprises 1484 residues: Chromosome partition protein MukB (1484 aa).

34–41 is an ATP binding site; the sequence is GGNGAGKS. Coiled-coil stretches lie at residues 338–415, 496–604, 781–805, 835–868, 903–1115, and 1206–1265; these read NLVQ…RAIQ, QTAR…ALAW, AARE…ATLS, EAEM…HYDQ, HDAQ…SAKA, and DDPV…LQAV. Residues 666 to 783 are flexible hinge; it reads PGGTDDARLT…AVPLFGRAAR (118 aa).

Belongs to the SMC family. MukB subfamily. In terms of assembly, homodimerization via its hinge domain. Binds to DNA via its C-terminal region. Interacts, and probably forms a ternary complex, with MukE and MukF via its C-terminal region. The complex formation is stimulated by calcium or magnesium. Interacts with tubulin-related protein FtsZ.

It is found in the cytoplasm. It localises to the nucleoid. Plays a central role in chromosome condensation, segregation and cell cycle progression. Functions as a homodimer, which is essential for chromosome partition. Involved in negative DNA supercoiling in vivo, and by this means organize and compact chromosomes. May achieve or facilitate chromosome segregation by condensation DNA from both sides of a centrally located replisome during cell division. This chain is Chromosome partition protein MukB, found in Sodalis glossinidius (strain morsitans).